Here is a 360-residue protein sequence, read N- to C-terminus: DNA replication and repair protein RecF (360 aa).

Residue Gly30–Thr37 coordinates ATP.

Belongs to the RecF family.

It is found in the cytoplasm. Functionally, the RecF protein is involved in DNA metabolism; it is required for DNA replication and normal SOS inducibility. RecF binds preferentially to single-stranded, linear DNA. It also seems to bind ATP. The protein is DNA replication and repair protein RecF of Thioalkalivibrio sulfidiphilus (strain HL-EbGR7).